Consider the following 94-residue polypeptide: MGGPHAKAYMGWWGSIGSPAQKGITTYTVSPYAQKPLNNIFHNAVFNTFRRVKSQILYMALPAALYWAWWVNCRDYNAYLYTKAGREELERVNV.

At 1–49 (MGGPHAKAYMGWWGSIGSPAQKGITTYTVSPYAQKPLNNIFHNAVFNTF) the chain is on the mitochondrial matrix side. The chain crosses the membrane as a helical span at residues 50–80 (RRVKSQILYMALPAALYWAWWVNCRDYNAYL). Over 81–94 (YTKAGREELERVNV) the chain is Mitochondrial intermembrane.

This sequence belongs to the UQCRQ/QCR8 family. As to quaternary structure, component of the ubiquinol-cytochrome c oxidoreductase (cytochrome b-c1 complex, complex III, CIII), a multisubunit enzyme composed of 3 respiratory subunits cytochrome b, cytochrome c1 and Rieske protein, 2 core protein subunits, and additional low-molecular weight protein subunits. The complex exists as an obligatory dimer and forms supercomplexes (SCs) in the inner mitochondrial membrane with cytochrome c oxidase (complex IV, CIV).

The protein localises to the mitochondrion inner membrane. In terms of biological role, component of the ubiquinol-cytochrome c oxidoreductase, a multisubunit transmembrane complex that is part of the mitochondrial electron transport chain which drives oxidative phosphorylation. The respiratory chain contains 3 multisubunit complexes succinate dehydrogenase (complex II, CII), ubiquinol-cytochrome c oxidoreductase (cytochrome b-c1 complex, complex III, CIII) and cytochrome c oxidase (complex IV, CIV), that cooperate to transfer electrons derived from NADH and succinate to molecular oxygen, creating an electrochemical gradient over the inner membrane that drives transmembrane transport and the ATP synthase. The cytochrome b-c1 complex catalyzes electron transfer from ubiquinol to cytochrome c, linking this redox reaction to translocation of protons across the mitochondrial inner membrane, with protons being carried across the membrane as hydrogens on the quinol. In the process called Q cycle, 2 protons are consumed from the matrix, 4 protons are released into the intermembrane space and 2 electrons are passed to cytochrome c. This is Cytochrome b-c1 complex subunit 8 (QCR8) from Kluyveromyces lactis (strain ATCC 8585 / CBS 2359 / DSM 70799 / NBRC 1267 / NRRL Y-1140 / WM37) (Yeast).